The following is a 1674-amino-acid chain: Maestro heat-like repeat-containing protein family member 2A (1674 aa).

The tract at residues 1 to 26 is disordered; sequence MTEAITEAAVASSEEVSEERDDLGPL. HEAT repeat units lie at residues 73-96, 97-133, 195-234, 254-292, 382-419, 424-461, 573-612, 615-641, 642-679, 739-776, 993-1030, 1221-1263, 1381-1420, and 1627-1674; these read ATTE…ISTQ, RKVN…EMRE, MPYM…TVQF, LKVF…LLLP, SYPK…ADEP, RAIY…CGYQ, PAPQ…SIAP, ADMW…DQKA, WEDK…SFDS, KTVL…ETVK, GQFG…LHAS, DPLM…SHRP, EKLL…GAPK, and LDFP…QGMS.

This chain is Maestro heat-like repeat-containing protein family member 2A (MROH2A), found in Homo sapiens (Human).